Here is a 264-residue protein sequence, read N- to C-terminus: MNSNYVPLTSSVDVEEKMESENGVDLGNDIDLEKGLPLKYNSENESGLPSNSASSYLINPDPTMDLEAQTFNHNESTTSVGHDNSNSPPKCRKTCSSNKVYSNEVPLLFVFVISISIVCIFDLVIFGCLQYNMVSMDDLHVMQRLSWFCASLALLFILMRYYDFWTKACKDGIKHIFKKWKNTPLAFLQVLIFNIIGFFVRKGLKDSFGEQWGLKTSLFAHVSFATMSIFIFIFETLKPGSCSVDWIARILKAVVYFLEDSDEL.

Residues 1-12 (MNSNYVPLTSSV) are compositionally biased toward polar residues. The tract at residues 1-26 (MNSNYVPLTSSVDVEEKMESENGVDL) is disordered. Helical transmembrane passes span 107–127 (LLFV…VIFG), 145–165 (LSWF…YDFW), 180–200 (WKNT…GFFV), and 217–237 (SLFA…FETL).

Belongs to the WTF family.

It localises to the membrane. May act in meiotic drive. The chain is Wtf element wtf11 from Schizosaccharomyces pombe (strain 972 / ATCC 24843) (Fission yeast).